We begin with the raw amino-acid sequence, 530 residues long: Cation transporter HKT2;2 (530 aa).

Topologically, residues 1–40 (MTSIYQEFIHTKCQSFRSIGRYVLHSIVLIYRFVSLHVHP) are cytoplasmic. 2 helical membrane-spanning segments follow: residues 41–61 (FWIQ…LLMF) and 102–122 (IVVL…FLGL). At 123-186 (MLRLKHKHNP…DLKRSKRLRW (64 aa)) the chain is on the cytoplasmic side. 2 consecutive transmembrane segments (helical) span residues 187-207 (FLGF…FLLV) and 260-280 (GLLL…PLFL). Topologically, residues 281 to 317 (RILIWFLGKVTKLKDLKLMIKNSDELQYDYLLPKLPT) are cytoplasmic. The next 2 membrane-spanning stretches (helical) occupy residues 318-338 (AFLA…FGSV) and 372-392 (IDCS…MYLP). Over 393–420 (PSTTFALSNGDEKTANKKAKRKLGLVVR) the chain is Cytoplasmic. 2 helical membrane passes run 421-441 (NLAF…LITE) and 494-514 (SLSG…MLYG). Over 515–530 (RLKAFTKGTGEYWRLW) the chain is Cytoplasmic.

The protein belongs to the TrkH potassium transport family. HKT (TC 2.A.38.3) subfamily.

The protein resides in the membrane. Its function is as follows. Seems to be involved in regulation of potassium-sodium homeostasis. Seems to act as a potassium-sodium cotransporter, which mediates increased potassium uptake under external sodium accumulation and contributes to salt-tolerance in cultivar indica Pokkali. In Oryza sativa subsp. indica (Rice), this protein is Cation transporter HKT2;2.